A 123-amino-acid chain; its full sequence is Small ribosomal subunit protein uS12 (123 aa).

3-methylthioaspartic acid is present on Asp89. Residues 104–123 (TAGVKDRKQARSKYGAKRPK) form a disordered region. A compositionally biased stretch (basic residues) spans 113–123 (ARSKYGAKRPK).

It belongs to the universal ribosomal protein uS12 family. Part of the 30S ribosomal subunit. Contacts proteins S8 and S17. May interact with IF1 in the 30S initiation complex.

Functionally, with S4 and S5 plays an important role in translational accuracy. In terms of biological role, interacts with and stabilizes bases of the 16S rRNA that are involved in tRNA selection in the A site and with the mRNA backbone. Located at the interface of the 30S and 50S subunits, it traverses the body of the 30S subunit contacting proteins on the other side and probably holding the rRNA structure together. The combined cluster of proteins S8, S12 and S17 appears to hold together the shoulder and platform of the 30S subunit. In Chromobacterium violaceum (strain ATCC 12472 / DSM 30191 / JCM 1249 / CCUG 213 / NBRC 12614 / NCIMB 9131 / NCTC 9757 / MK), this protein is Small ribosomal subunit protein uS12.